The chain runs to 299 residues: UTP--glucose-1-phosphate uridylyltransferase 1 (299 aa).

It belongs to the UDPGP type 2 family.

It carries out the reaction alpha-D-glucose 1-phosphate + UTP + H(+) = UDP-alpha-D-glucose + diphosphate. It participates in carbohydrate metabolism; nucleotide-sugar metabolism. This chain is UTP--glucose-1-phosphate uridylyltransferase 1 (hasC1), found in Streptococcus pyogenes serotype M6 (strain ATCC BAA-946 / MGAS10394).